The sequence spans 579 residues: Folliculin (579 aa).

The tract at residues 30–81 (PQGDGNEDSPGQGEQAEEEEGGIQMNSRMRAHSPAEGASVESSSPGPKKSDM) is disordered. S62 and S73 each carry phosphoserine. A uDENN FLCN/SMCR8-type domain is found at 86-242 (RSLAAGHPGY…RNGNAARSLT (157 aa)). Residues 210–220 (AEQFGCPQRAQ) are essential for interaction with LDHA. The stretch at 287 to 310 (EKLADLEEESESWDNSEAEEEEKA) forms a coiled coil. Residues 294–308 (EESESWDNSEAEEEE) show a composition bias toward acidic residues. The segment at 294 to 337 (EESESWDNSEAEEEEKAPVLPESTEGRELTQGPAESSSLSGCGS) is disordered. S302 bears the Phosphoserine mark. Positions 326 to 336 (PAESSSLSGCG) are enriched in polar residues. Residues 339-491 (QPRKLPVFKS…ILNKIEAALT (153 aa)) form the cDENN FLCN/SMCR8-type domain. A phosphoserine; by ULK1 mark is found at S406, S537, and S542. Positions 493 to 558 (QNLSVDVVDQ…LLKFWMTGLS (66 aa)) constitute a dDENN FLCN/SMCR8-type domain. Residue S571 is modified to Phosphoserine.

The protein belongs to the folliculin family. Interacts (via C-terminus) with FNIP1 or FNIP2 (via C-terminus). Component of the lysosomal folliculin complex (LFC), composed of FLCN, FNIP1 (or FNIP2), RagA/RRAGA or RagB/RRAGB GDP-bound, RagC/RRAGC or RagD/RRAGD GTP-bound, and Ragulator. Interaction with FNIP1 or FNIP2 mediates indirect interaction with the PRKAA1, PRKAB1 and PRKAG1 subunits of 5'-AMP-activated protein kinase (AMPK). Interacts with HSP90AA1 in the presence of FNIP1. Interacts with HSP70, STUB1, CDC37, AHSA1, CCT2, STIP1, PTGES3 and PPP5C. Interacts with GABARAP; interaction takes place in the presence of FNIP1 and/or FNIP2. Interacts with RILP; the interaction is direct and promotes association between RILP and RAB34. Interacts with KIF3A and KIF3B. Interacts with lactate dehydrogenase LDHA, but not LDHB; the interaction is direct, may preferentially bind LDHA dimers rather than tetramers, and regulates LDHA activity, acting as an uncompetitive inhibitor. Post-translationally, phosphorylation by ULK1 modulates the interaction with GABARAP and is required to regulate autophagy. In terms of tissue distribution, expressed in most tissues tested, including skin, lung, kidney, heart, testis and stomach.

The protein localises to the lysosome membrane. Its subcellular location is the cytoplasm. It localises to the cytosol. The protein resides in the cell projection. It is found in the cilium. The protein localises to the cytoskeleton. Its subcellular location is the microtubule organizing center. It localises to the centrosome. The protein resides in the spindle. It is found in the nucleus. With respect to regulation, GTPase-activating activity is inhibited in the folliculin complex (LFC), which stabilizes the GDP-bound state of RagA/RRAGA (or RagB/RRAGB), because Arg-164 is located far from the RagC/RRAGC or RagD/RRAGD nucleotide pocket. Disassembly of the LFC complex upon amino acid restimulation liberates the GTPase-activating activity. In terms of biological role, multi-functional protein, involved in both the cellular response to amino acid availability and in the regulation of glycolysis. GTPase-activating protein that plays a key role in the cellular response to amino acid availability through regulation of the non-canonical mTORC1 signaling cascade controlling the MiT/TFE factors TFEB and TFE3. Activates mTORC1 by acting as a GTPase-activating protein: specifically stimulates GTP hydrolysis by RagC/RRAGC or RagD/RRAGD, promoting the conversion to the GDP-bound state of RagC/RRAGC or RagD/RRAGD, and thereby activating the kinase activity of mTORC1. The GTPase-activating activity is inhibited during starvation and activated in presence of nutrients. Acts as a key component for non-canonical mTORC1-dependent control of the MiT/TFE factors TFEB and TFE3, while it is not involved in mTORC1-dependent phosphorylation of canonical RPS6KB1/S6K1 and EIF4EBP1/4E-BP1. In low-amino acid conditions, the lysosomal folliculin complex (LFC) is formed on the membrane of lysosomes, which inhibits the GTPase-activating activity of FLCN, inactivates mTORC1 and maximizes nuclear translocation of TFEB and TFE3. Upon amino acid restimulation, RagA/RRAGA (or RagB/RRAGB) nucleotide exchange promotes disassembly of the LFC complex and liberates the GTPase-activating activity of FLCN, leading to activation of mTORC1 and subsequent cytoplasmic retention of TFEB and TFE3. Indirectly acts as a positive regulator of Wnt signaling by promoting mTOR-dependent cytoplasmic retention of MiT/TFE factor TFE3. Required for the exit of hematopoietic stem cell from pluripotency by promoting mTOR-dependent cytoplasmic retention of TFE3, thereby increasing Wnt signaling. Acts as an inhibitor of browning of adipose tissue by regulating mTOR-dependent cytoplasmic retention of TFE3. Involved in the control of embryonic stem cells differentiation; together with LAMTOR1 it is necessary to recruit and activate RagC/RRAGC and RagD/RRAGD at the lysosomes, and to induce exit of embryonic stem cells from pluripotency via non-canonical, mTOR-independent TFE3 inactivation. In response to flow stress, regulates STK11/LKB1 accumulation and mTORC1 activation through primary cilia: may act by recruiting STK11/LKB1 to primary cilia for activation of AMPK resided at basal bodies, causing mTORC1 down-regulation. Together with FNIP1 and/or FNIP2, regulates autophagy: following phosphorylation by ULK1, interacts with GABARAP and promotes autophagy. Required for starvation-induced perinuclear clustering of lysosomes by promoting association of RILP with its effector RAB34. Regulates glycolysis by binding to lactate dehydrogenase LDHA, acting as an uncompetitive inhibitor. This is Folliculin from Homo sapiens (Human).